We begin with the raw amino-acid sequence, 581 residues long: Interleukin-22 receptor subunit alpha-1 (581 aa).

Positions 1–15 (MKTLLTILTVGSLAA) are cleaved as a signal peptide. Topologically, residues 16–230 (HTTVDTSGLL…TLPDRTWAYS (215 aa)) are extracellular. Fibronectin type-III domains are found at residues 18 to 115 (TVDT…RFSS) and 141 to 221 (PTLT…RVKT). C71 and C79 are disulfide-bonded. 2 N-linked (GlcNAc...) asparagine glycosylation sites follow: N80 and N172. The cysteines at positions 128 and 217 are disulfide-linked. The helical transmembrane segment at 231 to 251 (FSGAVLFSMGFLVGLLCYLGY) threads the bilayer. Residues 252–581 (KYITKPPVPP…GLALTVQWES (330 aa)) are Cytoplasmic-facing. The interval 343–364 (QQTLSPPSYAPKAVPEVQPPSY) is disordered. Residues S410 and S414 each carry the phosphoserine; by GSK3-beta modification. K449 participates in a covalent cross-link: Glycyl lysine isopeptide (Lys-Gly) (interchain with G-Cter in ubiquitin).

It belongs to the type II cytokine receptor family. In terms of assembly, heterodimer with IL10RB and with IL20RB. Phosphorylated by GSK3-BETA and MAPK; phosphorylation by GSK3-BETA stabilizes IL22RA1 by preventing its proteasomal degradation. Expressed in kidney, liver and lung.

The protein localises to the cell membrane. In terms of biological role, component of the receptor for IL20, IL22 and IL24. Component of IL22 receptor formed by IL22RA1 and IL10RB enabling IL22 signaling via JAK/STAT pathways. IL22 also induces activation of MAPK1/MAPK3 and Akt kinases pathways. Component of one of the receptor for IL20 and IL24 formed by IL22RA1 and IL20RB also signaling through STATs activation. Mediates IL24 antiangiogenic activity as well as IL24 inhibitory effect on endothelial cell tube formation and differentiation. This Mus musculus (Mouse) protein is Interleukin-22 receptor subunit alpha-1 (Il22ra1).